Reading from the N-terminus, the 332-residue chain is Glyoxylate reductase (332 aa).

Residues 155–158 (MGRI) and 236–238 (TSR) contribute to the NADP(+) site. Active-site residues include R238 and E267. The active-site Proton donor is H286. NADP(+) is bound at residue 286-288 (HAA).

Belongs to the D-isomer specific 2-hydroxyacid dehydrogenase family. GyaR subfamily. In terms of assembly, homodimer.

It is found in the cytoplasm. It catalyses the reaction glycolate + NAD(+) = glyoxylate + NADH + H(+). The polypeptide is Glyoxylate reductase (Korarchaeum cryptofilum (strain OPF8)).